Consider the following 164-residue polypeptide: Ribosome maturation factor RimP (164 aa).

It belongs to the RimP family.

The protein localises to the cytoplasm. Its function is as follows. Required for maturation of 30S ribosomal subunits. The protein is Ribosome maturation factor RimP of Cellvibrio japonicus (strain Ueda107) (Pseudomonas fluorescens subsp. cellulosa).